The sequence spans 387 residues: Pepsin A-5 (387 aa).

The N-terminal stretch at M1–C15 is a signal peptide. Residues L16 to T62 constitute a propeptide, activation peptide. In terms of domain architecture, Peptidase A1 spans Y74–A384. D92 is a catalytic residue. 2 disulfide bridges follow: C105/C110 and C266/C270. The active site involves D275. Residues C309 and C343 are joined by a disulfide bond.

Belongs to the peptidase A1 family. As to expression, expressed in glandular chief cells of the neonatal stomach. Expressed in yolk sacs of the placenta (at protein level).

Its subcellular location is the secreted. The enzyme catalyses Preferential cleavage: hydrophobic, preferably aromatic, residues in P1 and P1' positions. Cleaves 1-Phe-|-Val-2, 4-Gln-|-His-5, 13-Glu-|-Ala-14, 14-Ala-|-Leu-15, 15-Leu-|-Tyr-16, 16-Tyr-|-Leu-17, 23-Gly-|-Phe-24, 24-Phe-|-Phe-25 and 25-Phe-|-Tyr-26 bonds in the B chain of insulin.. Its activity is regulated as follows. Inhibited by pepstatin A. Its function is as follows. Shows particularly broad specificity; although bonds involving phenylalanine and leucine are preferred, many others are also cleaved to some extent. May play a role as a specialized neonatal digestive enzyme. The chain is Pepsin A-5 from Mus musculus (Mouse).